We begin with the raw amino-acid sequence, 379 residues long: Queuine tRNA-ribosyltransferase (379 aa).

D94 functions as the Proton acceptor in the catalytic mechanism. Residues D94–F98, D148, Q191, and G218 each bind substrate. Residues G249–S255 are RNA binding. The active-site Nucleophile is D268. The interval T273 to R277 is RNA binding; important for wobble base 34 recognition. 4 residues coordinate Zn(2+): C306, C308, C311, and H337.

Belongs to the queuine tRNA-ribosyltransferase family. In terms of assembly, homodimer. Within each dimer, one monomer is responsible for RNA recognition and catalysis, while the other monomer binds to the replacement base PreQ1. It depends on Zn(2+) as a cofactor.

It carries out the reaction 7-aminomethyl-7-carbaguanine + guanosine(34) in tRNA = 7-aminomethyl-7-carbaguanosine(34) in tRNA + guanine. Its pathway is tRNA modification; tRNA-queuosine biosynthesis. Functionally, catalyzes the base-exchange of a guanine (G) residue with the queuine precursor 7-aminomethyl-7-deazaguanine (PreQ1) at position 34 (anticodon wobble position) in tRNAs with GU(N) anticodons (tRNA-Asp, -Asn, -His and -Tyr). Catalysis occurs through a double-displacement mechanism. The nucleophile active site attacks the C1' of nucleotide 34 to detach the guanine base from the RNA, forming a covalent enzyme-RNA intermediate. The proton acceptor active site deprotonates the incoming PreQ1, allowing a nucleophilic attack on the C1' of the ribose to form the product. After dissociation, two additional enzymatic reactions on the tRNA convert PreQ1 to queuine (Q), resulting in the hypermodified nucleoside queuosine (7-(((4,5-cis-dihydroxy-2-cyclopenten-1-yl)amino)methyl)-7-deazaguanosine). This is Queuine tRNA-ribosyltransferase from Listeria monocytogenes serotype 4a (strain HCC23).